A 440-amino-acid chain; its full sequence is GTPase Der (440 aa).

EngA-type G domains follow at residues 4–168 and 177–352; these read PIVA…PENK and IKVA…NQRA. GTP contacts are provided by residues 10–17, 57–61, 120–123, 183–190, 230–234, and 295–298; these read GRPNVGKS, DTGGI, NKVD, GKPNVGKS, DTAGL, and NKWD. The KH-like domain maps to 353–437; it reads MRVPTGGLNE…PIRFIYREKS (85 aa).

The protein belongs to the TRAFAC class TrmE-Era-EngA-EngB-Septin-like GTPase superfamily. EngA (Der) GTPase family. In terms of assembly, associates with the 50S ribosomal subunit.

GTPase that plays an essential role in the late steps of ribosome biogenesis. This Alkaliphilus metalliredigens (strain QYMF) protein is GTPase Der.